A 614-amino-acid polypeptide reads, in one-letter code: FAD-linked oxidoreductase ffsJ (614 aa).

Positions Met-1 to Ala-19 are cleaved as a signal peptide. Asn-30, Asn-53, Asn-72, and Asn-114 each carry an N-linked (GlcNAc...) asparagine glycan. Residues Thr-119–Glu-301 enclose the FAD-binding PCMH-type domain. N-linked (GlcNAc...) asparagine glycans are attached at residues Asn-314, Asn-329, Asn-461, Asn-465, Asn-478, and Asn-514. Residues Asn-453 to Thr-495 are disordered. Low complexity predominate over residues Gly-456–Ser-480.

It belongs to the oxygen-dependent FAD-linked oxidoreductase family. FAD serves as cofactor.

Its pathway is mycotoxin biosynthesis. In terms of biological role, FAD-linked oxidoreductase; part of the gene cluster that mediates the biosynthesis of the cytotoxic leucine-containing cytochalasans, including aspochalasin C, aspochalasin E, TMC-169, flavichalasine F, aspergillin PZ, aspochalasin M and flavichalasine G. The first step in the pathway is catalyzed by the hybrid PKS-NRPS ffsA that utilizes 8 units of malonyl-CoA to iteratively assemble the octaketide chain before addition of L-leucine by the C-terminal NRPS modules. Because ffsA lacks a designated enoylreductase (ER) domain, the required activity is provided the enoyl reductase fssC. The methyltransferase (MT) domain of ffsA catalyzes the alpha-methylation at C10 and C14 using S-adenosyl-L-methionine as the methyl-donating cosubstrate. Reduction by the hydrolyase ffsE, followed by dehydration and intra-molecular Diels-Alder cyclization by the Diels-Alderase ffsF then yield the required isoindolone-fused macrocycle. A number of oxidative steps catalyzed by the tailoring cytochrome P450 monooxygenase ffsD, the FAD-linked oxidoreductase ffsJ and the short-chain dehydrogenase/reductase ffsI, are further required to afford the final products. In Aspergillus flavipes, this protein is FAD-linked oxidoreductase ffsJ.